We begin with the raw amino-acid sequence, 863 residues long: Leucine--tRNA ligase (863 aa).

The short motif at 42–53 (PYPSGSGLHVGH) is the 'HIGH' region element. A 'KMSKS' region motif is present at residues 635 to 639 (KMSKS). Lys638 contributes to the ATP binding site.

It belongs to the class-I aminoacyl-tRNA synthetase family.

The protein localises to the cytoplasm. The catalysed reaction is tRNA(Leu) + L-leucine + ATP = L-leucyl-tRNA(Leu) + AMP + diphosphate. The chain is Leucine--tRNA ligase from Salinibacter ruber (strain DSM 13855 / M31).